The following is a 181-amino-acid chain: NAD(P)H-quinone oxidoreductase subunit I, chloroplastic (181 aa).

4Fe-4S ferredoxin-type domains are found at residues 52-81 and 92-121; these read GRIH…VDWE and KSYS…MTEE. The [4Fe-4S] cluster site is built by Cys61, Cys64, Cys67, Cys71, Cys101, Cys104, Cys107, and Cys111.

Belongs to the complex I 23 kDa subunit family. As to quaternary structure, NDH is composed of at least 16 different subunits, 5 of which are encoded in the nucleus. It depends on [4Fe-4S] cluster as a cofactor.

The protein resides in the plastid. It is found in the chloroplast thylakoid membrane. The catalysed reaction is a plastoquinone + NADH + (n+1) H(+)(in) = a plastoquinol + NAD(+) + n H(+)(out). It catalyses the reaction a plastoquinone + NADPH + (n+1) H(+)(in) = a plastoquinol + NADP(+) + n H(+)(out). NDH shuttles electrons from NAD(P)H:plastoquinone, via FMN and iron-sulfur (Fe-S) centers, to quinones in the photosynthetic chain and possibly in a chloroplast respiratory chain. The immediate electron acceptor for the enzyme in this species is believed to be plastoquinone. Couples the redox reaction to proton translocation, and thus conserves the redox energy in a proton gradient. The sequence is that of NAD(P)H-quinone oxidoreductase subunit I, chloroplastic from Zygnema circumcarinatum (Green alga).